A 115-amino-acid polypeptide reads, in one-letter code: NADH-ubiquinone oxidoreductase chain 3 (115 aa).

3 helical membrane-spanning segments follow: residues 3-23 (LMLT…IAFW), 55-75 (FFLV…LLPL), and 86-106 (TMLT…AYEW).

Belongs to the complex I subunit 3 family. In terms of assembly, core subunit of respiratory chain NADH dehydrogenase (Complex I) which is composed of 45 different subunits. Interacts with TMEM186. Interacts with TMEM242.

The protein resides in the mitochondrion inner membrane. It catalyses the reaction a ubiquinone + NADH + 5 H(+)(in) = a ubiquinol + NAD(+) + 4 H(+)(out). Core subunit of the mitochondrial membrane respiratory chain NADH dehydrogenase (Complex I) which catalyzes electron transfer from NADH through the respiratory chain, using ubiquinone as an electron acceptor. Essential for the catalytic activity of complex I. This chain is NADH-ubiquinone oxidoreductase chain 3, found in Ceratotherium simum (White rhinoceros).